A 568-amino-acid chain; its full sequence is Proline--tRNA ligase (568 aa).

This sequence belongs to the class-II aminoacyl-tRNA synthetase family. ProS type 1 subfamily. Homodimer.

It is found in the cytoplasm. It carries out the reaction tRNA(Pro) + L-proline + ATP = L-prolyl-tRNA(Pro) + AMP + diphosphate. Functionally, catalyzes the attachment of proline to tRNA(Pro) in a two-step reaction: proline is first activated by ATP to form Pro-AMP and then transferred to the acceptor end of tRNA(Pro). As ProRS can inadvertently accommodate and process non-cognate amino acids such as alanine and cysteine, to avoid such errors it has two additional distinct editing activities against alanine. One activity is designated as 'pretransfer' editing and involves the tRNA(Pro)-independent hydrolysis of activated Ala-AMP. The other activity is designated 'posttransfer' editing and involves deacylation of mischarged Ala-tRNA(Pro). The misacylated Cys-tRNA(Pro) is not edited by ProRS. The polypeptide is Proline--tRNA ligase (Lysinibacillus sphaericus (strain C3-41)).